We begin with the raw amino-acid sequence, 283 residues long: Acetyl-coenzyme A carboxylase carboxyl transferase subunit beta (283 aa).

The CoA carboxyltransferase N-terminal domain maps to 29-283 (LWISCPKCQQ…VKIHSMKGAF (255 aa)). Zn(2+) is bound by residues Cys-33, Cys-36, Cys-51, and Cys-54. The C4-type zinc finger occupies 33-54 (CPKCQQSIYHKDLGKYKTCPNC).

It belongs to the AccD/PCCB family. Acetyl-CoA carboxylase is a heterohexamer composed of biotin carboxyl carrier protein (AccB), biotin carboxylase (AccC) and two subunits each of ACCase subunit alpha (AccA) and ACCase subunit beta (AccD). Zn(2+) is required as a cofactor.

The protein localises to the cytoplasm. It carries out the reaction N(6)-carboxybiotinyl-L-lysyl-[protein] + acetyl-CoA = N(6)-biotinyl-L-lysyl-[protein] + malonyl-CoA. It participates in lipid metabolism; malonyl-CoA biosynthesis; malonyl-CoA from acetyl-CoA: step 1/1. In terms of biological role, component of the acetyl coenzyme A carboxylase (ACC) complex. Biotin carboxylase (BC) catalyzes the carboxylation of biotin on its carrier protein (BCCP) and then the CO(2) group is transferred by the transcarboxylase to acetyl-CoA to form malonyl-CoA. This chain is Acetyl-coenzyme A carboxylase carboxyl transferase subunit beta, found in Ligilactobacillus salivarius (strain UCC118) (Lactobacillus salivarius).